Consider the following 359-residue polypeptide: Guanine nucleotide-binding protein subunit alpha-11 (359 aa).

2 S-palmitoyl cysteine lipidation sites follow: Cys-9 and Cys-10. The G-alpha domain maps to 38–359; the sequence is RELKLLLLGT…QLNLKEYNLV (322 aa). Residues 41 to 54 are G1 motif; that stretch reads KLLLLGTGESGKST. Residues 46-53 and 180-183 each bind GTP; these read GTGESGKS and LRVR. Ser-53 lines the Mg(2+) pocket. The tract at residues 178–186 is G2 motif; sequence DVLRVRVPT. Residue Thr-186 coordinates Mg(2+). Residues 201 to 210 are G3 motif; sequence FRMVDVGGQR. The G4 motif stretch occupies residues 270-277; that stretch reads ILFLNKKD. Residues 274–277 and Ala-331 contribute to the GTP site; that span reads NKKD. The G5 motif stretch occupies residues 329-334; it reads TCATDT.

This sequence belongs to the G-alpha family. G(q) subfamily. In terms of assembly, g proteins are composed of 3 units; alpha, beta and gamma. The alpha chain contains the guanine nucleotide binding site. Interacts with RGS22. Interacts with NTSR1.

The protein resides in the cell membrane. The protein localises to the cytoplasm. It carries out the reaction GTP + H2O = GDP + phosphate + H(+). Functionally, guanine nucleotide-binding proteins (G proteins) function as transducers downstream of G protein-coupled receptors (GPCRs) in numerous signaling cascades. The alpha chain contains the guanine nucleotide binding site and alternates between an active, GTP-bound state and an inactive, GDP-bound state. Signaling by an activated GPCR promotes GDP release and GTP binding. The alpha subunit has a low GTPase activity that converts bound GTP to GDP, thereby terminating the signal. Both GDP release and GTP hydrolysis are modulated by numerous regulatory proteins. Signaling is mediated via phospholipase C-beta-dependent inositol lipid hydrolysis for signal propagation: activates phospholipase C-beta: following GPCR activation, GNA11 activates PLC-beta (PLCB1, PLCB2, PLCB3 or PLCB4), leading to production of diacylglycerol (DAG) and inositol 1,4,5-trisphosphate (IP3). Transduces FFAR4 signaling in response to long-chain fatty acids (LCFAs). Together with GNAQ, required for heart development. In the respiratory epithelium, transmits OXGR1-dependent signals that lead to downstream intracellular Ca(2+) release and mucocilliary clearance of airborne pathogens. In Sus scrofa (Pig), this protein is Guanine nucleotide-binding protein subunit alpha-11 (GNA11).